A 554-amino-acid polypeptide reads, in one-letter code: MAPLLSQTLIHTGRFLLRRFLEPPPAVISAVAASRVCFHRYYSSKSLSLVSPLGLHCSSLFSPPALCNSAFSSSATSTTIEVQSTEHEVVIALGSNIGNRMNNFREALRLMKRGGICVTRHSCLYETAPVHVTDQPRFLNAAVRGVTKLGPHELLSVLKTIERDMGRKDGIRYGPRPLDLDILFYGKMRISSDKLIIPHERLWERSFVLAPLVDLLGSAVDNDTVAHWHSLAIHPGGIFQAWERLGGESLIGQDGIQRVLPIGDKLWDFSNKTHVMGILNLTPDSFSDGGKFQSIDSAVSRVRSMISEGADIIDIGAQSTRPMASRISSQEELDRLLPVLEAVRGMPEMEEKLISVDTFNSEVASEAISNGADILNDVSAGTLDPNMHKVVAESGVPYMAMHMRGDPCTMQNKENLQYDDVCKDVASELYLRVRDAELSGIPAWRVMIDPGIGFSKSVDHNLDIIMDLPKIREEMAKRSIAVSHAPILVGPSRKRFLGDICGRPEATDRDAATVASVTAGILGGANIIRVHNVRHNADAAKVCDAMLRRRRSKG.

Residues 1–42 (MAPLLSQTLIHTGRFLLRRFLEPPPAVISAVAASRVCFHRYY) constitute a mitochondrion transit peptide. Positions 90–215 (VIALGSNIGN…SFVLAPLVDL (126 aa)) are HPPK. The Pterin-binding domain maps to 273-541 (THVMGILNLT…NVRHNADAAK (269 aa)). The DHPS stretch occupies residues 275 to 554 (VMGILNLTPD…AMLRRRRSKG (280 aa)). Asparagine 280 contacts Mg(2+). Residues threonine 320, aspartate 357, asparagine 376, aspartate 449, lysine 494, and 529-531 (RVH) each bind (7,8-dihydropterin-6-yl)methyl diphosphate.

It in the N-terminal section; belongs to the HPPK family. The protein in the C-terminal section; belongs to the DHPS family. Requires Mg(2+) as cofactor. Ubiquitous.

Its subcellular location is the mitochondrion. It catalyses the reaction 6-hydroxymethyl-7,8-dihydropterin + ATP = (7,8-dihydropterin-6-yl)methyl diphosphate + AMP + H(+). The enzyme catalyses (7,8-dihydropterin-6-yl)methyl diphosphate + 4-aminobenzoate = 7,8-dihydropteroate + diphosphate. The protein operates within cofactor biosynthesis; tetrahydrofolate biosynthesis; 2-amino-4-hydroxy-6-hydroxymethyl-7,8-dihydropteridine diphosphate from 7,8-dihydroneopterin triphosphate: step 4/4. It functions in the pathway cofactor biosynthesis; tetrahydrofolate biosynthesis; 7,8-dihydrofolate from 2-amino-4-hydroxy-6-hydroxymethyl-7,8-dihydropteridine diphosphate and 4-aminobenzoate: step 1/2. Functionally, catalyzes the first two consecutive steps of tetrahydrofolate biosynthesis. The polypeptide is Folate synthesis bifunctional protein, mitochondrial (Arabidopsis thaliana (Mouse-ear cress)).